The chain runs to 411 residues: Protein Brevis radix-like 2 (411 aa).

Disordered regions lie at residues 10 to 31 (KDGG…KSLT) and 103 to 149 (AAPS…DDDE). The span at 20-31 (ATATPNSGKSLT) shows a compositional bias: polar residues. Residues 136 to 149 (GEEDYDDDDDDDDE) are compositionally biased toward acidic residues. The 57-residue stretch at 161–217 (REWTAQVEPGVQITFVSIPGGAGNDLKRIRFSREMFNKWEAQRWWGENYDRVVELYN) folds into the BRX 1 domain. Disordered stretches follow at residues 245–294 (SRVG…VAAA) and 324–346 (AGPA…ASVS). Residues 276 to 294 (SRTASSKAQLSSSSSVAAA) are compositionally biased toward low complexity. Residues 356–411 (TEWVEQDEPGVSITIREFGDGTRELRRVRFSRERFGEERAKVWWEQNRDRIHAQYL) form the BRX 2 domain.

It belongs to the BRX family.

Its subcellular location is the nucleus. The protein is Protein Brevis radix-like 2 (BRXL2) of Oryza sativa subsp. japonica (Rice).